The following is a 258-amino-acid chain: uncharacterized protein (258 aa).

ATP is bound at residue 36-43; it reads GKAGTGKS.

The protein belongs to the IIV-6 075L family.

This is an uncharacterized protein from Acheta domesticus (House cricket).